The primary structure comprises 382 residues: Protein delta homolog 2 (382 aa).

An N-terminal signal peptide occupies residues 1–26 (MPSGCRCLNLVCLLCILGATSQPARA). 4 EGF-like domains span residues 27–58 (DDCSSHCDLAHGCCAPDGSCRCDPGWEGLHCE), 62–89 (RMPGCQHGTCHQPWQCICHSGWAGKFCD), 91–129 (DEHICTSQSPCQNGGQCVYDGGGEYHCVCLPGFRGRGCE), and 131–172 (KAGP…AHCE). Over 27–305 (DDCSSHCDLA…RQEAGLGESS (279 aa)) the chain is Extracellular. Cystine bridges form between cysteine 29-cysteine 40, cysteine 33-cysteine 46, cysteine 48-cysteine 57, cysteine 66-cysteine 71, cysteine 79-cysteine 88, cysteine 95-cysteine 107, cysteine 101-cysteine 117, cysteine 119-cysteine 128, cysteine 135-cysteine 148, cysteine 142-cysteine 160, cysteine 162-cysteine 171, cysteine 178-cysteine 189, cysteine 183-cysteine 198, cysteine 200-cysteine 209, cysteine 216-cysteine 227, cysteine 221-cysteine 236, and cysteine 238-cysteine 247. Asparagine 157 is a glycosylation site (N-linked (GlcNAc...) asparagine). The EGF-like 5; calcium-binding domain maps to 174–210 (NVDDCLMRPCANGATCIDGINRFSCLCPEGFAGRFCT). The EGF-like 6; calcium-binding domain occupies 212–248 (NLDDCASRPCQRGARCRDRVHDFDCLCPSGYGGKTCE). The helical transmembrane segment at 306–326 (LVALVVFGSLTAALVLATVLL) threads the bilayer. Residues 327–382 (TLRAWRRGICPTGPCCDPAPHYAPARQDQECQVSMLPAGFPLSPDLPPEPGKTTAL) are Cytoplasmic-facing.

It is found in the membrane. Its function is as follows. Regulates adipogenesis. This is Protein delta homolog 2 (Dlk2) from Rattus norvegicus (Rat).